Consider the following 228-residue polypeptide: Ephrin-A5 (228 aa).

The first 20 residues, 1–20, serve as a signal peptide directing secretion; it reads MLHVEMLTLLFLVLWMCVFS. Residues 29 to 162 enclose the Ephrin RBD domain; the sequence is ADRYAVYWNS…KLKVFVRPTN (134 aa). Residue asparagine 37 is glycosylated (N-linked (GlcNAc...) asparagine). Intrachain disulfides connect cysteine 62–cysteine 102 and cysteine 90–cysteine 151. A glycan (N-linked (GlcNAc...) asparagine; atypical) is linked at asparagine 162. Positions 186–205 are disordered; that stretch reads EPADDTVHESAEPSRGENAA. Over residues 190–200 the composition is skewed to basic and acidic residues; that stretch reads DTVHESAEPSR. Residue asparagine 203 is the site of GPI-anchor amidated asparagine attachment. Residues 204 to 228 constitute a propeptide, removed in mature form; it reads AAQTPRIPSRLLAILLFLLAMLLTL.

This sequence belongs to the ephrin family. As to quaternary structure, binds to the receptor tyrosine kinases EPHA2, EPHA3 and EPHB1. Forms a ternary EFNA5-EPHA3-ADAM10 complex mediating EFNA5 extracellular domain shedding by ADAM10 which regulates the EFNA5-EPHA3 complex internalization and function. Binds to EPHB2. Interacts with EPHA8; activates EPHA8. In terms of tissue distribution, expressed in myogenic progenitor cells.

It is found in the cell membrane. The protein localises to the membrane. The protein resides in the caveola. Functionally, cell surface GPI-bound ligand for Eph receptors, a family of receptor tyrosine kinases which are crucial for migration, repulsion and adhesion during neuronal, vascular and epithelial development. Binds promiscuously Eph receptors residing on adjacent cells, leading to contact-dependent bidirectional signaling into neighboring cells. The signaling pathway downstream of the receptor is referred to as forward signaling while the signaling pathway downstream of the ephrin ligand is referred to as reverse signaling. Induces compartmentalized signaling within a caveolae-like membrane microdomain when bound to the extracellular domain of its cognate receptor. This signaling event requires the activity of the Fyn tyrosine kinase. Activates the EPHA3 receptor to regulate cell-cell adhesion and cytoskeletal organization. With the receptor EPHA2 may regulate lens fiber cells shape and interactions and be important for lens transparency maintenance. May function actively to stimulate axon fasciculation. The interaction of EFNA5 with EPHA5 also mediates communication between pancreatic islet cells to regulate glucose-stimulated insulin secretion. Cognate/functional ligand for EPHA7, their interaction regulates brain development modulating cell-cell adhesion and repulsion. This Mus musculus (Mouse) protein is Ephrin-A5 (Efna5).